We begin with the raw amino-acid sequence, 88 residues long: Large ribosomal subunit protein eL31 (88 aa).

This sequence belongs to the eukaryotic ribosomal protein eL31 family.

The chain is Large ribosomal subunit protein eL31 (rpl31e) from Sulfurisphaera tokodaii (strain DSM 16993 / JCM 10545 / NBRC 100140 / 7) (Sulfolobus tokodaii).